A 329-amino-acid polypeptide reads, in one-letter code: MQNSIIGFLKPRLVEIEQITATHTKVTLEPLERGFGHTLGNALRRILLSSMPGYAVTEVEIDGVLHEYSTKEGVQEDILEILLNLKELAVKVHGKDEVFMSLNKSGIGSVTASDIIHDGDVEIIKPDHLICHLTDENASIQMRIKVQRGRGYIPASSRIHMEDDLRPIGCLLVDACYSPINRISYNVEAARVEQRTDLDKLIIEMKTNGTIDPEEAIRRAATILSEQLEAFVDLRDVKEPEIKEEKPEFEPILLRPVDDLELTVRSANCLKAESIHYIGDLVQRTEVELLKTPNLGKKSLTEIKDILAARNLSLGMKLEKWPPSSILEE.

An alpha N-terminal domain (alpha-NTD) region spans residues 1-235; the sequence is MQNSIIGFLK…EQLEAFVDLR (235 aa). The alpha C-terminal domain (alpha-CTD) stretch occupies residues 249–329; sequence FEPILLRPVD…KWPPSSILEE (81 aa).

Belongs to the RNA polymerase alpha chain family. In terms of assembly, homodimer. The RNAP catalytic core consists of 2 alpha, 1 beta, 1 beta' and 1 omega subunit. When a sigma factor is associated with the core the holoenzyme is formed, which can initiate transcription.

The catalysed reaction is RNA(n) + a ribonucleoside 5'-triphosphate = RNA(n+1) + diphosphate. Functionally, DNA-dependent RNA polymerase catalyzes the transcription of DNA into RNA using the four ribonucleoside triphosphates as substrates. This is DNA-directed RNA polymerase subunit alpha from Buchnera aphidicola subsp. Schizaphis graminum (strain Sg).